We begin with the raw amino-acid sequence, 442 residues long: Cytochrome c biogenesis CcmF C-terminal-like mitochondrial protein (442 aa).

3 helical membrane passes run 6–26 (NFFF…PVLL), 39–59 (PFFN…LVYL), and 122–142 (YLES…FFLA). Residues 151–175 (RARRRKGQTLRPNGNEQRRNDKMRC) form a disordered region. Residues 166-175 (EQRRNDKMRC) show a composition bias toward basic and acidic residues. The chain crosses the membrane as a helical span at residues 411–431 (FIFFIWIGFMLASLGGLPSLL).

Belongs to the CcmF/CycK/Ccl1/NrfE/CcsA family. As to quaternary structure, interacts with CCMFN2.

Its subcellular location is the mitochondrion inner membrane. Its function is as follows. Forms a complex with CCMFN1, CCMFN2 and CCMH that performs the assembly of heme with c-type apocytochromes in mitochondria. The sequence is that of Cytochrome c biogenesis CcmF C-terminal-like mitochondrial protein (CCMFC) from Arabidopsis thaliana (Mouse-ear cress).